The following is a 112-amino-acid chain: UPF0060 membrane protein XOO1694 (112 aa).

4 consecutive transmembrane segments (helical) span residues 8–28, 32–52, 62–82, and 92–112; these read LLLF…PYLW, GGSV…VWLL, VYAA…LWWV, and LLGA…PRSA.

It belongs to the UPF0060 family.

The protein resides in the cell inner membrane. The sequence is that of UPF0060 membrane protein XOO1694 from Xanthomonas oryzae pv. oryzae (strain MAFF 311018).